Consider the following 107-residue polypeptide: Growth-regulated alpha protein (107 aa).

An N-terminal signal peptide occupies residues 1–34; the sequence is MARAALSAAPSNPRLLRVALLLLLLVAAGRRAAG. Cystine bridges form between cysteine 43/cysteine 69 and cysteine 45/cysteine 85.

The protein belongs to the intercrine alpha (chemokine CxC) family. Post-translationally, N-terminal processed forms GRO-alpha(4-73), GRO-alpha(5-73) and GRO-alpha(6-73) are produced by proteolytic cleavage after secretion from peripheral blood monocytes.

It localises to the secreted. Functionally, has chemotactic activity for neutrophils. May play a role in inflammation and exerts its effects on endothelial cells in an autocrine fashion. In vitro, the processed forms GRO-alpha(4-73), GRO-alpha(5-73) and GRO-alpha(6-73) show a 30-fold higher chemotactic activity. In Homo sapiens (Human), this protein is Growth-regulated alpha protein (CXCL1).